Reading from the N-terminus, the 467-residue chain is Glutamine synthetase (467 aa).

In terms of domain architecture, GS beta-grasp spans 14–98 (EEVEYVDIRF…VHCNVVEPDT (85 aa)). The GS catalytic domain maps to 106–467 (PRGAAVKAEA…PVEYQMYYSC (362 aa)). Positions 131 and 133 each coordinate Mg(2+). Residue Asp-209 participates in ATP binding. Residues Glu-214 and Glu-221 each coordinate Mg(2+). L-glutamate contacts are provided by residues 265-266 (NG) and Gly-266. His-270 is a Mg(2+) binding site. Residues 272 to 274 (NMS) and Ser-274 contribute to the ATP site. Residues Arg-320, Glu-326, and Arg-338 each contribute to the L-glutamate site. Residues Arg-338 and Arg-343 each coordinate ATP. Glu-356 serves as a coordination point for Mg(2+). Arg-358 provides a ligand contact to L-glutamate. The residue at position 396 (Tyr-396) is an O-AMP-tyrosine.

Belongs to the glutamine synthetase family. Oligomer of 12 subunits arranged in the form of two hexameric ring. Mg(2+) serves as cofactor.

The protein resides in the cytoplasm. The catalysed reaction is L-glutamate + NH4(+) + ATP = L-glutamine + ADP + phosphate + H(+). The activity of this enzyme could be controlled by adenylation under conditions of abundant glutamine. In terms of biological role, catalyzes the ATP-dependent biosynthesis of glutamine from glutamate and ammonia. The chain is Glutamine synthetase from Cereibacter sphaeroides (Rhodobacter sphaeroides).